The chain runs to 100 residues: Small ribosomal subunit protein bS20 (100 aa).

Belongs to the bacterial ribosomal protein bS20 family.

Its function is as follows. Binds directly to 16S ribosomal RNA. The sequence is that of Small ribosomal subunit protein bS20 from Prochlorococcus marinus (strain MIT 9211).